The primary structure comprises 333 residues: MIETLLQSPSSWTNFFIFFGLAVLLLFAVLGFVTYGILAERKVMGFMQGRIGPNQVGGRFGLLQTVADVLKLLLKEDSIPKAADKPLFILAPVIAFAPAFMVLAVIPFTDKFQFADIGVGLLYYIAVSGITTIGVVTGGWASNNKYSLLGGMRAAAQMISYEIPLVMSVIGIVLLAGSLNLNEIVAAQENVWYIFVQPVGFVVFLIAAVAELNRTPFDLPEAESELVSGYHTEYSGFRWAFFMLSEYVYFFGMASLITVLFLGGWNPVMFLGFIPGAVWFALKFSSVVFLLIWFRVTFPRIRGDQLMEFGWKVLLPIALANIFLTALIKELFF.

Helical transmembrane passes span 15-35 (FFIF…FVTY), 88-108 (FILA…VIPF), 117-137 (IGVG…GVVT), 159-179 (ISYE…AGSL), 191-211 (VWYI…AVAE), 239-259 (WAFF…LITV), 274-296 (IPGA…WFRV), and 313-333 (VLLP…ELFF).

This sequence belongs to the complex I subunit 1 family. As to quaternary structure, NDH-1 is composed of 14 different subunits. Subunits NuoA, H, J, K, L, M, N constitute the membrane sector of the complex.

The protein resides in the cell membrane. The catalysed reaction is a quinone + NADH + 5 H(+)(in) = a quinol + NAD(+) + 4 H(+)(out). In terms of biological role, NDH-1 shuttles electrons from NADH, via FMN and iron-sulfur (Fe-S) centers, to quinones in the respiratory chain. The immediate electron acceptor for the enzyme in this species is believed to be ubiquinone. Couples the redox reaction to proton translocation (for every two electrons transferred, four hydrogen ions are translocated across the cytoplasmic membrane), and thus conserves the redox energy in a proton gradient. This subunit may bind ubiquinone. This chain is NADH-quinone oxidoreductase subunit H, found in Bacillus thuringiensis subsp. konkukian (strain 97-27).